A 211-amino-acid chain; its full sequence is Urease accessory protein UreG (211 aa).

Gly13–Thr20 contacts GTP.

It belongs to the SIMIBI class G3E GTPase family. UreG subfamily. In terms of assembly, homodimer. UreD, UreF and UreG form a complex that acts as a GTP-hydrolysis-dependent molecular chaperone, activating the urease apoprotein by helping to assemble the nickel containing metallocenter of UreC. The UreE protein probably delivers the nickel.

Its subcellular location is the cytoplasm. Functionally, facilitates the functional incorporation of the urease nickel metallocenter. This process requires GTP hydrolysis, probably effectuated by UreG. The chain is Urease accessory protein UreG from Alkalilimnicola ehrlichii (strain ATCC BAA-1101 / DSM 17681 / MLHE-1).